The chain runs to 71 residues: Large ribosomal subunit protein bL31 (71 aa).

The Zn(2+) site is built by cysteine 16, cysteine 18, cysteine 37, and cysteine 40.

This sequence belongs to the bacterial ribosomal protein bL31 family. Type A subfamily. Part of the 50S ribosomal subunit. It depends on Zn(2+) as a cofactor.

Its function is as follows. Binds the 23S rRNA. This is Large ribosomal subunit protein bL31 from Sodalis glossinidius (strain morsitans).